Consider the following 482-residue polypeptide: ATP synthase subunit beta (482 aa).

162–169 serves as a coordination point for ATP; sequence GGAGVGKT.

Belongs to the ATPase alpha/beta chains family. F-type ATPases have 2 components, CF(1) - the catalytic core - and CF(0) - the membrane proton channel. CF(1) has five subunits: alpha(3), beta(3), gamma(1), delta(1), epsilon(1). CF(0) has four main subunits: a(1), b(1), b'(1) and c(9-12).

The protein resides in the cellular thylakoid membrane. It catalyses the reaction ATP + H2O + 4 H(+)(in) = ADP + phosphate + 5 H(+)(out). Its function is as follows. Produces ATP from ADP in the presence of a proton gradient across the membrane. The catalytic sites are hosted primarily by the beta subunits. This Trichormus variabilis (strain ATCC 29413 / PCC 7937) (Anabaena variabilis) protein is ATP synthase subunit beta.